A 113-amino-acid chain; its full sequence is Protein NATD1 (113 aa).

The span at 1–16 (MAQSPAAASPGAPEQG) shows a compositional bias: low complexity. The segment at 1–20 (MAQSPAAASPGAPEQGCPIR) is disordered. Residues 22 to 112 (EHDRRRRQFT…PLPQYLERLQ (91 aa)) form the N-acetyltransferase domain.

It belongs to the NATD1 family.

This is Protein NATD1 (NATD1) from Bos taurus (Bovine).